Reading from the N-terminus, the 454-residue chain is Adenylosuccinate synthetase isozyme 1 B (454 aa).

Positions 1-24 (MSGTRASNDRSSHPGAGGHKRPRY) are disordered. Residues 39–45 (GDEGKGK) and 67–69 (GHT) each bind GTP. D40 (proton acceptor) is an active-site residue. Residues D40 and G67 each contribute to the Mg(2+) site. Substrate is bound at residue D40. IMP contacts are provided by residues 40–43 (DEGK), 65–68 (NAGH), T160, R174, N253, T268, and R332. The active-site Proton donor is the H68. Position 328-334 (328-334 (VTTGRKR)) interacts with substrate. Residues R334, 360–362 (KLD), and 442–445 (GVGK) contribute to the GTP site.

It belongs to the adenylosuccinate synthetase family. Homodimer. Mg(2+) is required as a cofactor.

The protein resides in the cytoplasm. It carries out the reaction IMP + L-aspartate + GTP = N(6)-(1,2-dicarboxyethyl)-AMP + GDP + phosphate + 2 H(+). The protein operates within purine metabolism; AMP biosynthesis via de novo pathway; AMP from IMP: step 1/2. Functionally, component of the purine nucleotide cycle (PNC), which interconverts IMP and AMP to regulate the nucleotide levels in various tissues, and which contributes to glycolysis and ammoniagenesis. Catalyzes the first committed step in the biosynthesis of AMP from IMP. The polypeptide is Adenylosuccinate synthetase isozyme 1 B (adss1-b) (Xenopus laevis (African clawed frog)).